Reading from the N-terminus, the 955-residue chain is MAM domain-containing glycosylphosphatidylinositol anchor protein 1 (955 aa).

Residues 1-18 (MEVTCLLLLALIPFHCRG) form the signal peptide. Ig-like domains lie at 24–123 (PAQA…KSIR) and 132–230 (PMLT…KAIT). Residues Asn42 and Asn90 are each glycosylated (N-linked (GlcNAc...) asparagine). Intrachain disulfides connect Cys60/Cys108 and Cys157/Cys214. Residues Asn235, Asn247, Asn257, Asn307, and Asn331 are each glycosylated (N-linked (GlcNAc...) asparagine). Residues 240-323 (PALKLSVNET…VGNPAKKTVN (84 aa)) form the Ig-like 3 domain. Cys262 and Cys308 form a disulfide bridge. Ig-like domains follow at residues 338 to 432 (PDVI…VEVN), 440 to 532 (PTIS…AQVQ), and 539 to 631 (PEVE…FQVS). Cys357 and Cys415 form a disulfide bridge. Asn432 is a glycosylation site (N-linked (GlcNAc...) asparagine). 2 disulfides stabilise this stretch: Cys463/Cys514 and Cys560/Cys615. One can recognise a Fibronectin type-III domain in the interval 643–743 (TPNPTRSHKL…SRIIHYTEPI (101 aa)). 2 N-linked (GlcNAc...) asparagine glycosylation sites follow: Asn655 and Asn747. An MAM domain is found at 751-918 (NTCHFEDEKI…VTLKKGECPR (168 aa)). The segment covering 779-788 (LTQNPKRSPN) has biased composition (polar residues). The tract at residues 779–798 (LTQNPKRSPNTGPPTDISGT) is disordered. Asn826 carries an N-linked (GlcNAc...) asparagine glycan. Ser932 carries GPI-anchor amidated serine lipidation. The propeptide at 933–955 (GAPCQSSPQLWGPMAIFLLALQR) is removed in mature form.

As to quaternary structure, interacts heterophilically through its MAM domain with proteins in axon-rich regions and through its Ig-like domains with proteins in differentiating muscle. Interacts (through the Ig-like domains) with NLGN2. In terms of tissue distribution, has been found in brain, heart, skeletal muscle and kidney. Found to be overexpressed in tumor tissues.

It localises to the cell membrane. Its function is as follows. Required for radial migration of cortical neurons in the superficial layer of the neocortex. Plays a role in the formation or maintenance of inhibitory synapses. May function by inhibiting the activity of NLGN2. The polypeptide is MAM domain-containing glycosylphosphatidylinositol anchor protein 1 (MDGA1) (Homo sapiens (Human)).